Here is a 310-residue protein sequence, read N- to C-terminus: D-alanyl-D-alanine endopeptidase (310 aa).

A signal peptide spans 1–25; sequence MPKFRVSLFSLALMLAVPFAPQAVA. Ser67 functions as the Acyl-ester intermediate in the catalytic mechanism. Residue Lys70 is the Proton acceptor of the active site. Residue Ser124 is part of the active site. Lys231 provides a ligand contact to substrate.

It belongs to the peptidase S11 family. In terms of processing, pbp8 is a proteolytic product of Pbp7.

It localises to the periplasm. Its function is as follows. Cell wall formation. May play a specialized role in remodeling the cell wall. Specifically hydrolyzes the DD-diaminopimelate-alanine bonds in high-molecular-mass murein sacculi. This chain is D-alanyl-D-alanine endopeptidase (pbpG), found in Escherichia coli (strain K12).